We begin with the raw amino-acid sequence, 345 residues long: Probable galacturonosyltransferase-like 3 (345 aa).

The Cytoplasmic portion of the chain corresponds to 1 to 7 (MSSLRLR). A helical; Signal-anchor for type II membrane protein transmembrane segment spans residues 8-28 (LCLLLLLPITISCVTVTLTDL). Over 29 to 345 (PAFREAPAFR…FRYSPLISDS (317 aa)) the chain is Lumenal. An N-linked (GlcNAc...) asparagine glycan is attached at Asn-197.

It belongs to the glycosyltransferase 8 family.

Its subcellular location is the golgi apparatus membrane. Its pathway is glycan metabolism; pectin biosynthesis. Functionally, may be involved in pectin and/or xylans biosynthesis in cell walls. The protein is Probable galacturonosyltransferase-like 3 (GATL3) of Arabidopsis thaliana (Mouse-ear cress).